A 72-amino-acid polypeptide reads, in one-letter code: Putative beta-neurotoxin (72 aa).

Residues 1–7 (IDMVVEC) form the signal peptide. The region spanning 9–71 (KDGYLMEHDG…TWSRATNRCG (63 aa)) is the LCN-type CS-alpha/beta domain. 4 cysteine pairs are disulfide-bonded: Cys19-Cys70, Cys23-Cys45, Cys31-Cys51, and Cys35-Cys53.

Expressed by the venom gland.

The protein resides in the secreted. Beta toxins bind voltage-independently at site-4 of sodium channels (Nav) and shift the voltage of activation toward more negative potentials thereby affecting sodium channel activation and promoting spontaneous and repetitive firing. In Tityus pachyurus (Colombian scorpion), this protein is Putative beta-neurotoxin.